Reading from the N-terminus, the 860-residue chain is MKFSSANKILFSGLVASANAYDLLKDYAGDLKIGVAANAMRFSNSNYVNAMKAFNMMVAENDCKLSGIQQQKGVYNFNGCDNHYNKAKELGMEFRGHCLIWHSYQPSWFQNADANTLKNAIVDHITKTLQHYEGKIKVWDVVNEAIDDNSNGNGWNMRRSFLYNKVPNFVDLAFQTARKVSPNTKLFYNDYNAEGVYAKAESIYNFVSDLKKRNIPIDGVGLQYHVGAKEQPSYNKINDLIGRYCKLGLEVHITELDVKLQGDQNGQSQAFSNALKACLANSCCKAFLVWGVGDNDSWLGANEQALLFNGSYQPKPVYNTLLNILKTSARPASSSAKTLPGNSKSKTLPGVNSKTLPGNKSKTLPGASKTLPGNKSKTLPGGNSNTLPGNKSKTLPGGNSKTLPGNKSRTLPGGNSKTLPGGKSRTLPGGNSKTLPGGKSKTLPGGNSKTLPGGKSKTLPGGNSKTLPGGSSKTLPGGKSKTLPGGNSKTLPGGSSKTLPGGKSKTLPGGSSKTLPGGKSKTLPGGNSKTLPGGNSKTLPGGSSKTLPGGKSKTLPGGNSKTLPGGSSKTLPGGKSKTLPGGNSKTLPGGNSKTLPGGKSKTLPGGNSKTLPGGSSKTLPGGKSKTLPGGSSKTLPGGKSKTLPGGNSKTLPGGNSKTLPGGSSKTLPGGKSKTLPGGSSKTLPGGKSKTLPGGNSKTLPGGKSKTLPGGNSKTLPGGKSKTLPGGNSKTLPGGKSKTLPGGNSKTLPGGSSKTLPGGKSKTLPGGNSKTLPGGKSKTLPGGNTKTLPGGACKPTTVTVTQKVTVTVTVESQPTQGGMNQGGGNCAAKWGQCGGNGFNGPTCCQNGSRCQFVNEWYSQCL.

Residues 1 to 20 (MKFSSANKILFSGLVASANA) form the signal peptide. Positions 21–324 (YDLLKDYAGD…KPVYNTLLNI (304 aa)) constitute a GH10 domain. Glu144 acts as the Proton donor in catalysis. The active-site Nucleophile is Glu255. Cysteines 278 and 284 form a disulfide. Residues Asn295, Asn309, Asn359, and Asn374 are each glycosylated (N-linked (GlcNAc...) asparagine). Polar residues-rich tracts occupy residues 330-362 (RPAS…NKSK) and 371-418 (LPGN…NSKT). Residues 330–793 (RPASSSAKTL…TKTLPGGACK (464 aa)) form a disordered region. Repeat unit 1 spans residues 375–382 (KSKTLPGG). Residues 375 to 782 (KSKTLPGGNS…GGKSKTLPGG (408 aa)) are 47 X 8 AA tandem repeats of [SKN]-S-K-T-L-P-G-G. Asn390 is a glycosylation site (N-linked (GlcNAc...) asparagine). Copy 2 of the repeat occupies 391-398 (KSKTLPGG). A glycan (N-linked (GlcNAc...) asparagine) is linked at Asn406. A run of 45 repeats spans residues 415–422 (NSKTLPGG), 431–438 (NSKTLPGG), 439–446 (KSKTLPGG), 447–454 (NSKTLPGG), 455–462 (KSKTLPGG), 463–470 (NSKTLPGG), 471–478 (SSKTLPGG), 479–486 (KSKTLPGG), 487–494 (NSKTLPGG), 495–502 (SSKTLPGG), 503–510 (KSKTLPGG), 511–518 (SSKTLPGG), 519–526 (KSKTLPGG), 527–534 (NSKTLPGG), 535–542 (NSKTLPGG), 543–550 (SSKTLPGG), 551–558 (KSKTLPGG), 559–566 (NSKTLPGG), 567–574 (SSKTLPGG), 575–582 (KSKTLPGG), 583–590 (NSKTLPGG), 591–598 (NSKTLPGG), 599–606 (KSKTLPGG), 607–614 (NSKTLPGG), 615–622 (SSKTLPGG), 623–630 (KSKTLPGG), 631–638 (SSKTLPGG), 639–646 (KSKTLPGG), 647–654 (NSKTLPGG), 655–662 (NSKTLPGG), 663–670 (SSKTLPGG), 671–678 (KSKTLPGG), 679–686 (SSKTLPGG), 687–694 (KSKTLPGG), 695–702 (NSKTLPGG), 703–710 (KSKTLPGG), 711–718 (NSKTLPGG), 719–726 (KSKTLPGG), 727–734 (NSKTLPGG), 735–742 (KSKTLPGG), 743–750 (NSKTLPGG), 751–758 (SSKTLPGG), 759–766 (KSKTLPGG), 767–774 (NSKTLPGG), and 775–782 (KSKTLPGG). Polar residues-rich tracts occupy residues 461-474 (GGNS…SSKT) and 485-498 (GGNS…SSKT). 4 stretches are compositionally biased toward polar residues: residues 525 to 546 (GGNS…SSKT), 557 to 570 (GGNS…SSKT), 581 to 594 (GGNS…NSKT), and 605 to 618 (GGNS…SSKT). A compositionally biased stretch (polar residues) spans 645–666 (GGNSKTLPGGNSKTLPGGSSKT). Over residues 741–754 (GGNSKTLPGGSSKT) the composition is skewed to polar residues. The CBM1 domain occupies 824-860 (NCAAKWGQCGGNGFNGPTCCQNGSRCQFVNEWYSQCL). A glycan (N-linked (GlcNAc...) asparagine) is linked at Asn845.

Belongs to the glycosyl hydrolase 10 (cellulase F) family.

It localises to the secreted. It catalyses the reaction Endohydrolysis of (1-&gt;4)-beta-D-xylosidic linkages in xylans.. It functions in the pathway glycan degradation; xylan degradation. Its function is as follows. Endo-1,4-beta-xylanase involved in the hydrolysis of xylan, a major structural heterogeneous polysaccharide found in plant biomass representing the second most abundant polysaccharide in the biosphere, after cellulose. Hydrolyzes both unsubstituted (oat spelts) and highly substituted (rye and wheat) forms of arabinoxylanslans. The sequence is that of Endo-1,4-beta-xylanase B (xynB) from Neocallimastix patriciarum (Rumen fungus).